Here is a 146-residue protein sequence, read N- to C-terminus: Hemoglobin subunit beta-1 (146 aa).

Residues 2–146 (GLTAHDRQLI…IADALGKGYH (145 aa)) enclose the Globin domain. Residues His63 and His92 each contribute to the heme b site.

This sequence belongs to the globin family. As to quaternary structure, heterotetramer of two alpha chains and two beta chains. In terms of tissue distribution, red blood cells.

Functionally, involved in oxygen transport from the lung to the various peripheral tissues. This chain is Hemoglobin subunit beta-1 (hbb1), found in Xenopus borealis (Kenyan clawed frog).